Reading from the N-terminus, the 380-residue chain is Chaperone protein DnaJ (380 aa).

A J domain is found at 5–72 (DFYEVLGVAK…NKRAAYDQYG (68 aa)). The CR-type zinc-finger motif lies at 140–218 (GKDAQIRIPS…CGGQGKVKRQ (79 aa)). Residues Cys153, Cys156, Cys170, Cys173, Cys192, Cys195, Cys206, and Cys209 each coordinate Zn(2+). CXXCXGXG motif repeat units lie at residues 153–160 (CDTCHGSG), 170–177 (CTTCNGMG), 192–199 (CPHCRGTG), and 206–213 (CTSCGGQG). Residues 359 to 380 (KGGAKHSPSGESWTDRLKSFFS) form a disordered region. The segment covering 371–380 (WTDRLKSFFS) has biased composition (basic and acidic residues).

It belongs to the DnaJ family. As to quaternary structure, homodimer. The cofactor is Zn(2+).

The protein resides in the cytoplasm. In terms of biological role, participates actively in the response to hyperosmotic and heat shock by preventing the aggregation of stress-denatured proteins and by disaggregating proteins, also in an autonomous, DnaK-independent fashion. Unfolded proteins bind initially to DnaJ; upon interaction with the DnaJ-bound protein, DnaK hydrolyzes its bound ATP, resulting in the formation of a stable complex. GrpE releases ADP from DnaK; ATP binding to DnaK triggers the release of the substrate protein, thus completing the reaction cycle. Several rounds of ATP-dependent interactions between DnaJ, DnaK and GrpE are required for fully efficient folding. Also involved, together with DnaK and GrpE, in the DNA replication of plasmids through activation of initiation proteins. The sequence is that of Chaperone protein DnaJ from Delftia acidovorans (strain DSM 14801 / SPH-1).